Reading from the N-terminus, the 1845-residue chain is MTTMMTDSGTASDSGAGLVDSTRNDTTTTTTTTTTPGDNDADDDNTNGTTTGHHDNNETDNNSKSYSSTHHVPAIDNTSTTNANDNEDAAGFLDRDQSPLSSISSPLSEPDNFEFDTEPIPSILSPKSTTSDNHARDGETPELDEDGQPPAKRRRVRETTPHNHSRKPKPESPPWKKFEAEGPTTIITEDGRRKSGRVNPVLLGMKPSDKKVTRKAIQTSPVSNKSSASTSRKPAPASSSNSKHAPAKMPPPPPPPKAPARKSATTHETRPSASRSRRRSPSPRRPATPPKPAAVGTRRSTRQALAHSRASYDDGQLSPGASRATPRIKLKVRPPLTVIPLVHPNQANVRPKLGPTFEEYFARAHEIPVEEGGQHIPDEEPKYTDEMALQDAKVILRVEKEVEPGGLLAPDRCSAFEPEAEEEPPRQWAHLDHLTKAMTNFRKLMYREQQLHMQAAKRIAIACEAEWRRRNPQPKTAEEIELEEMEASKAKWRQVIRAFAGTWENVRVEVNRRRLVEWEAEEQRRVKAALNQAVNLSEQKLQQRQAQVDGDEITDEDEDEDDEDLASGMPSVMGDEKESDEHSDQGSDEMSDENDEDEDEDNMSSSEDDDKKSTASDEGLTQEELRAKYANLPTLGTTDETEETTKDVEMADAPAAMDGSVANDDDTSDESVDMDDDLGSSEESDDDEEEEEDDEEEEESDDEPAGLLGLFFGKSELKKLKEEAVTEEPSVEPAGDVEMTDASAALRPELQVNGHAHEAPITNGTHTNEQLASSQTEGADDEVSLLVIPNDEIAAENTQTAAEPGSGVVEKDFLTNDSSLKYPNEIVQSENQTLPAKESVEAGGDLPMVDAPSTDDLQRETAAAPSLEAPPNTRHDSQETVAATDMQSQSQTQSPKTTDTKPTDVDTPHSELAVSVQKPDSRQSSPQPTTPTVKTEIPFLLRGTLREYQHHGLDWLAGLYANNTNGILADEMGLGKTIQTIALLAHLACHHEVWGPHLVIVPTSVMLNWEMEFKKWCPGFKILTYYGNQEERKRKRQGWNNDDVWNVCITSYQMVLQDQQVFRRRRWHYMILDEAHNIKNFKSQRWQTLLGFNTQARLLLTGTPLQNNLTELWSLLYFLAPPENGEGGFVDLTEFHNWFARPESQILESGREQLDDEARAIIAKLHKVLRPYLLRRLKADVEKQMPAKYEHVEFCRLSKRQRELYDGFLSRADTRETLQSGNYMSIINCLMQLRKVCNHPDLFVDRPIMTSFRMSRSVPADYEWKEKFIRNRLLATKPMTTVNLSFLNMIPTEYEDLSKTHTDRIAQLSSHRILLDLREAQKVRANNAYTALDPSSVKSNLVYLESAARWGRFEELQHCVYINALRRQQRPIYGKRLTEFLTLDTHLRPYKPRPRVPAKIMSWFEEDSFLLHNAIPTLQQRAESMEMTITKFACVTPAVVTGPEMNRFLLGERGIQLFEDLDLKLSAPVKYAPYMPPQPPPDPWHEARMRLTIQFPDKRLLQYDCGKLQALDKLLRKLQAGGHRALIFTQMTKVLDILEQFLNIHGHKYLRLDGATKVEQRQILTDRFNHDPRILCFILSTRSGGLGINLTGADTVIFYDQDWNPAMDKQCQDRCHRIGQTRDVHIYRLVSEHTIEANILRKASQKQMLDDVVIQEGEFTTDYFNRLSVRDVLGSNGEVIASNEDDVAANLAMDRVLGGPSTTGAGGYDGTADGGGGASQPPVRNVGRVLEMAEDREDVDAAKAAEKEIMQDEADFGEAGSTRPGTPGDGLADLDGQLLGGEENKEVEDEVIEYNAWGERMHTIDEYMLGFMAKALEGTPLELPRDRKKGRDRNRNRKGKDSRKR.

Positions 1–13 (MTTMMTDSGTASD) are enriched in polar residues. The interval 1–329 (MTTMMTDSGT…GASRATPRIK (329 aa)) is disordered. Low complexity predominate over residues 24 to 38 (NDTTTTTTTTTTPGD). Over residues 63-84 (SKSYSSTHHVPAIDNTSTTNAN) the composition is skewed to polar residues. Residues 98 to 108 (SPLSSISSPLS) are compositionally biased toward low complexity. The span at 168 to 180 (PKPESPPWKKFEA) shows a compositional bias: basic and acidic residues. Residues 216 to 243 (AIQTSPVSNKSSASTSRKPAPASSSNSK) are compositionally biased toward polar residues. Composition is skewed to pro residues over residues 248-258 (KMPPPPPPPKA) and 283-292 (PRRPATPPKP). The region spanning 418–493 (PEAEEEPPRQ…EMEASKAKWR (76 aa)) is the HSA domain. Disordered regions lie at residues 539–713 (QKLQ…LFFG) and 749–935 (ELQV…TVKT). Over residues 549-565 (DGDEITDEDEDEDDEDL) the composition is skewed to acidic residues. Basic and acidic residues predominate over residues 574 to 585 (GDEKESDEHSDQ). Acidic residues-rich tracts occupy residues 586 to 608 (GSDE…SSED) and 663 to 704 (NDDD…DDEP). Polar residues-rich tracts occupy residues 762–777 (TNGT…SQTE) and 815–834 (TNDS…NQTL). A compositionally biased stretch (low complexity) spans 888 to 897 (SQSQTQSPKT). Residues 898–909 (TDTKPTDVDTPH) show a composition bias toward basic and acidic residues. Positions 922–933 (RQSSPQPTTPTV) are enriched in polar residues. Residues 957–1122 (AGLYANNTNG…WSLLYFLAPP (166 aa)) enclose the Helicase ATP-binding domain. 970 to 977 (DEMGLGKT) is an ATP binding site. The DEAH box motif lies at 1073–1076 (DEAH). In terms of domain architecture, Helicase C-terminal spans 1510 to 1660 (ALDKLLRKLQ…DVVIQEGEFT (151 aa)). 3 disordered regions span residues 1702 to 1724 (TTGA…PPVR), 1751 to 1783 (QDEA…GGEE), and 1816 to 1845 (LEGT…SRKR). Residues 1704 to 1718 (GAGGYDGTADGGGGA) show a composition bias toward gly residues. Residues 1769–1781 (DGLADLDGQLLGG) are compositionally biased toward low complexity. The segment covering 1826–1845 (DRKKGRDRNRNRKGKDSRKR) has biased composition (basic residues).

It belongs to the SNF2/RAD54 helicase family. SWR1 subfamily. As to quaternary structure, component of the SWR1 chromatin-remodeling complex.

It is found in the nucleus. It carries out the reaction ATP + H2O = ADP + phosphate + H(+). Catalytic component of the SWR1 complex which mediates the ATP-dependent exchange of histone H2A for the H2A variant H2A.Z leading to transcriptional regulation of selected genes by chromatin remodeling. This is Helicase swr-1 (crf1-1) from Neurospora crassa (strain ATCC 24698 / 74-OR23-1A / CBS 708.71 / DSM 1257 / FGSC 987).